Consider the following 94-residue polypeptide: Co-chaperonin GroES (94 aa).

It belongs to the GroES chaperonin family. In terms of assembly, heptamer of 7 subunits arranged in a ring. Interacts with the chaperonin GroEL.

It is found in the cytoplasm. In terms of biological role, together with the chaperonin GroEL, plays an essential role in assisting protein folding. The GroEL-GroES system forms a nano-cage that allows encapsulation of the non-native substrate proteins and provides a physical environment optimized to promote and accelerate protein folding. GroES binds to the apical surface of the GroEL ring, thereby capping the opening of the GroEL channel. In Exiguobacterium sp. (strain ATCC BAA-1283 / AT1b), this protein is Co-chaperonin GroES.